A 101-amino-acid polypeptide reads, in one-letter code: Ubiquitin-related modifier 1 (101 aa).

G101 bears the 1-thioglycine mark. G101 is covalently cross-linked (Glycyl lysine isopeptide (Gly-Lys) (interchain with K-? in acceptor proteins)).

Belongs to the URM1 family. Post-translationally, C-terminal thiocarboxylation occurs in 2 steps, it is first acyl-adenylated (-COAMP) via the hesA/moeB/thiF part of UBA4, then thiocarboxylated (-COSH) via the rhodanese domain of UBA4.

Its subcellular location is the cytoplasm. Its pathway is tRNA modification; 5-methoxycarbonylmethyl-2-thiouridine-tRNA biosynthesis. Acts as a sulfur carrier required for 2-thiolation of mcm(5)S(2)U at tRNA wobble positions of cytosolic tRNA(Lys), tRNA(Glu) and tRNA(Gln). Serves as sulfur donor in tRNA 2-thiolation reaction by being thiocarboxylated (-COSH) at its C-terminus by the MOCS3 homolog UBA4. The sulfur is then transferred to tRNA to form 2-thiolation of mcm(5)S(2)U. Prior mcm(5) tRNA modification by the elongator complex is required for 2-thiolation. Also acts as a ubiquitin-like protein (UBL) that is covalently conjugated via an isopeptide bond to lysine residues of target proteins such as AHP1. The thiocarboxylated form serves as substrate for conjugation and oxidative stress specifically induces the formation of UBL-protein conjugates. The sequence is that of Ubiquitin-related modifier 1 from Scheffersomyces stipitis (strain ATCC 58785 / CBS 6054 / NBRC 10063 / NRRL Y-11545) (Yeast).